We begin with the raw amino-acid sequence, 151 residues long: MSNEENQQKVVVSLEDLLAQADALKKYIDYLQKTYAELQDNIMSIDSSLQALKELQNSQELLMVGDKRGNVIFKVQGIDKAKVLVHLGLEYYAEVDPDFATKVLNDKKSELSNVLSNVEKELAKSLEAYKEIADILNQAQQQLQAQQNKGG.

The protein belongs to the prefoldin subunit alpha family. As to quaternary structure, heterohexamer of two alpha and four beta subunits.

It is found in the cytoplasm. Its function is as follows. Molecular chaperone capable of stabilizing a range of proteins. Seems to fulfill an ATP-independent, HSP70-like function in archaeal de novo protein folding. This is Prefoldin subunit alpha from Sulfurisphaera tokodaii (strain DSM 16993 / JCM 10545 / NBRC 100140 / 7) (Sulfolobus tokodaii).